The chain runs to 313 residues: DNA-directed RNA polymerase subunit alpha (313 aa).

The segment at 1–229 (MNSSNLLMEC…NLFKSIGEQK (229 aa)) is alpha N-terminal domain (alpha-NTD). The alpha C-terminal domain (alpha-CTD) stretch occupies residues 243-313 (IKPIDPYTHI…LKNKLGIVLK (71 aa)).

It belongs to the RNA polymerase alpha chain family. As to quaternary structure, in plastids the minimal PEP RNA polymerase catalytic core is composed of four subunits: alpha, beta, beta', and beta''. When a (nuclear-encoded) sigma factor is associated with the core the holoenzyme is formed, which can initiate transcription.

It is found in the plastid. The protein localises to the chloroplast. It catalyses the reaction RNA(n) + a ribonucleoside 5'-triphosphate = RNA(n+1) + diphosphate. Functionally, DNA-dependent RNA polymerase catalyzes the transcription of DNA into RNA using the four ribonucleoside triphosphates as substrates. The polypeptide is DNA-directed RNA polymerase subunit alpha (Thalassiosira pseudonana (Marine diatom)).